Consider the following 468-residue polypeptide: Neuronal acetylcholine receptor subunit alpha-5 (468 aa).

The signal sequence occupies residues 1-22 (MATRGSGPRAPRLLLLVQLVAG). The Extracellular portion of the chain corresponds to 23–254 (RCGLAGAAGG…VIKRLPLFYT (232 aa)). N-linked (GlcNAc...) asparagine glycans are attached at residues asparagine 155, asparagine 183, and asparagine 229. Residues cysteine 170 and cysteine 184 are joined by a disulfide bond. A disulfide bridge links cysteine 234 with cysteine 235. The next 3 helical transmembrane spans lie at 255–275 (LFLIIPCIGLSFLTVLVFYLP), 282–302 (ICLCTSVLVSLTVFLLVIEEI), and 317–337 (LVFTMIFVTLSIMVTVFAINI). Residues 338-429 (HHRSSSTHNA…WKFIAQVLDR (92 aa)) are Cytoplasmic-facing. The helical transmembrane segment at 430–451 (MFLWTFLFVSIVGSLGLFVPVI) threads the bilayer. Topologically, residues 452 to 468 (YKWANILIPVHIGNANK) are extracellular.

It belongs to the ligand-gated ion channel (TC 1.A.9) family. Acetylcholine receptor (TC 1.A.9.1) subfamily. Alpha-5/CHRNA5 sub-subfamily. As to quaternary structure, neuronal AChR that forms heteropentamers composed of two different type of subunits: alpha and non-alpha (beta). CHRNA5/alpha-5 subunit is only able to form functional nAChRs when co-assembled with another alpha subunit, can be combined to CHRNA4/alpha-4 or CHRNA3/alpha-3 and CHRNB4/beta-4 or CHRNB2/beta-2 to give rise to functional receptors. Interacts with LYPD6.

Its subcellular location is the synaptic cell membrane. It localises to the cell membrane. It catalyses the reaction Ca(2+)(in) = Ca(2+)(out). It carries out the reaction K(+)(in) = K(+)(out). The catalysed reaction is Na(+)(in) = Na(+)(out). With respect to regulation, activated by a myriad of ligands such as acetylcholine, cytisine, nicotine, choline and epibatidine. Functionally, component of neuronal acetylcholine receptors (nAChRs) that function as pentameric, ligand-gated cation channels with high calcium permeability among other activities. nAChRs are excitatory neurotrasnmitter receptors formed by a collection of nAChR subunits known to mediate synaptic transmission in the nervous system and the neuromuscular junction. Each nAchR subunit confers differential attributes to channel properties, including activation, deactivation and desensitization kinetics, pH sensitivity, cation permeability, and binding to allosteric modulators. Has an accessory rather than functional role and is only able to form functional nAChRs when co-assembled with another beta subunit. Participates in pentameric assemblies along with CHRNA3, CHRNA4, CHRNB2 and CHRNB4. Increases receptor sensitivity to acetylcholine and nicotine when associated with CHRNA4 and CHRNB2. Plays a role in nicotine addiction. The protein is Neuronal acetylcholine receptor subunit alpha-5 (CHRNA5) of Pan troglodytes (Chimpanzee).